We begin with the raw amino-acid sequence, 167 residues long: Translationally-controlled tumor protein homolog (167 aa).

Positions 1–167 (MKLFTDIISN…WKDGLRETKI (167 aa)) constitute a TCTP domain.

The protein belongs to the TCTP family.

It localises to the cytoplasm. Its subcellular location is the cytoskeleton. Involved in protein synthesis. Involved in microtubule stabilization. This chain is Translationally-controlled tumor protein homolog, found in Mycosarcoma maydis (Corn smut fungus).